The following is a 198-amino-acid chain: Glycerol-3-phosphate acyltransferase (198 aa).

Helical transmembrane passes span 5–25 (LILL…LWIG), 56–76 (SIVT…PFFF), 84–104 (FWLL…FAGF), 114–134 (AGVI…IFLL), and 158–178 (LFMG…FVVW).

This sequence belongs to the PlsY family. Probably interacts with PlsX.

Its subcellular location is the cell membrane. The catalysed reaction is an acyl phosphate + sn-glycerol 3-phosphate = a 1-acyl-sn-glycero-3-phosphate + phosphate. The protein operates within lipid metabolism; phospholipid metabolism. Functionally, catalyzes the transfer of an acyl group from acyl-phosphate (acyl-PO(4)) to glycerol-3-phosphate (G3P) to form lysophosphatidic acid (LPA). This enzyme utilizes acyl-phosphate as fatty acyl donor, but not acyl-CoA or acyl-ACP. The chain is Glycerol-3-phosphate acyltransferase from Listeria welshimeri serovar 6b (strain ATCC 35897 / DSM 20650 / CCUG 15529 / CIP 8149 / NCTC 11857 / SLCC 5334 / V8).